The chain runs to 553 residues: Putative transport protein YidE (553 aa).

Helical transmembrane passes span 4–24 (IALT…IGNV), 28–48 (GIGL…HFVS), 65–85 (FGLI…FFAS), 95–115 (LFAV…HKLF), and 158–178 (MSYA…MWML). RCK C-terminal domains lie at 191–276 (QQHE…VIGQ) and 279–361 (DTSL…VLGN). Transmembrane regions (helical) follow at residues 371-391 (MLPV…PVFV), 393-413 (GFPA…ALIL), 439-459 (IVLF…NTLV), 464-484 (LSWI…VGIL), 493-513 (YLTM…LAFA), and 533-553 (LVMF…WSIG).

The protein belongs to the AAE transporter (TC 2.A.81) family. YidE subfamily.

The protein resides in the cell membrane. This Shigella boydii serotype 4 (strain Sb227) protein is Putative transport protein YidE.